Reading from the N-terminus, the 359-residue chain is 3-dehydroquinate synthase (359 aa).

NAD(+)-binding positions include 70–75, 105–109, 129–130, Lys-142, Lys-151, and 169–172; these read DGEQYK, GVIGD, TT, and FYKT. Residues Glu-184, His-247, and His-264 each coordinate Zn(2+).

Belongs to the sugar phosphate cyclases superfamily. Dehydroquinate synthase family. It depends on Co(2+) as a cofactor. Zn(2+) serves as cofactor. The cofactor is NAD(+).

It is found in the cytoplasm. The enzyme catalyses 7-phospho-2-dehydro-3-deoxy-D-arabino-heptonate = 3-dehydroquinate + phosphate. Its pathway is metabolic intermediate biosynthesis; chorismate biosynthesis; chorismate from D-erythrose 4-phosphate and phosphoenolpyruvate: step 2/7. Catalyzes the conversion of 3-deoxy-D-arabino-heptulosonate 7-phosphate (DAHP) to dehydroquinate (DHQ). This Francisella tularensis subsp. holarctica (strain FTNF002-00 / FTA) protein is 3-dehydroquinate synthase.